An 818-amino-acid chain; its full sequence is H(+)/Cl(-) exchange transporter 3 (818 aa).

The Cytoplasmic segment spans residues 1–125 (MESEQLFHRG…WEMTKSLYDA (125 aa)). Short sequence motifs (di-leucine internalization motif; mediates targeting to late endosome and lysosome membranes) lie at residues 28–29 (LL), 46–47 (LL), and 71–75 (LLDLL). A helical transmembrane segment spans residues 126-163 (WSGWLVVTLTGLASGALAGLIDIAADWMTDLKEGICLS). N-linked (GlcNAc...) asparagine glycosylation is present at N177. Residues 209 to 232 (MNYIMYIFWALSFAFLAVSLVKVF) traverse the membrane as a helical segment. A Selectivity filter part_1 motif is present at residues 238–242 (GSGIP). S239 provides a ligand contact to chloride. Residues 241–248 (IPEIKTIL) constitute an intramembrane region (helical). The next 2 membrane-spanning stretches (helical) occupy residues 258–276 (GKWT…VASG) and 282–301 (EGPL…YLFP). Residues 280–284 (GKEGP) carry the Selectivity filter part_2 motif. 2 consecutive intramembrane regions (helical) follow at residues 313-325 (VLSA…VSVA) and 329-337 (PIGGVLFSL). 3 consecutive transmembrane segments (helical) span residues 349–367 (LWRS…RSIN), 391–416 (FPFI…AWCR), and 423–443 (FGKY…VIAF). N-linked (GlcNAc...) asparagine glycans are attached at residues N451 and N479. Helical transmembrane passes span 500 to 520 (IWQL…TFGI) and 525 to 544 (GLFI…VGIA). Positions 525-529 (GLFIP) match the Selectivity filter part_3 motif. F527 contributes to the chloride binding site. 2 consecutive intramembrane regions (helical) follow at residues 572-586 (GLYA…LGGV) and 590-601 (TVSLVVIVFELT). Positions 602 to 605 (GGLE) form an intramembrane region, note=Loop between two helices. Residues 606–624 (YIVPLMAAVMTSKWVGDAF) traverse the membrane as a helical segment. Residues 625-818 (GREGIYEAHI…NQDPASIMFN (194 aa)) lie on the Cytoplasmic side of the membrane. Y630 is a chloride binding site. CBS domains are found at residues 658-722 (MRPR…ARKK) and 755-812 (LDMS…NQDP). ATP-binding positions include 689–691 (YNG) and 796–799 (TKKD).

It belongs to the chloride channel (TC 2.A.49) family. ClC-3/CLCN3 subfamily. Monomer and homodimer. Forms heterodimers with CLCN4. Post-translationally, N-glycosylated. In terms of tissue distribution, abundant in brain, especially in the olfactory bulb, hippocampus, and cerebellum. A moderate expression is seen in the lung, kidney and adrenal gland.

The protein localises to the lysosome membrane. It is found in the late endosome membrane. It localises to the cell membrane. Its subcellular location is the early endosome membrane. Strongly outwardly rectifying, electrogenic H(+)/Cl(-)exchanger which mediates the exchange of chloride ions against protons. The CLC channel family contains both chloride channels and proton-coupled anion transporters that exchange chloride or another anion for protons. The presence of conserved gating glutamate residues is typical for family members that function as antiporters. Its function is as follows. Strongly outwardly rectifying, electrogenic H(+)/Cl(-)exchanger which mediates the exchange of chloride ions against protons. May play an important role in neuronal cell function through regulation of membrane excitability by protein kinase C. It could help neuronal cells to establish short-term memory. The chain is H(+)/Cl(-) exchange transporter 3 (Clcn3) from Rattus norvegicus (Rat).